The primary structure comprises 428 residues: Enolase (428 aa).

(2R)-2-phosphoglycerate is bound at residue Gln-164. The active-site Proton donor is the Glu-206. Mg(2+) is bound by residues Asp-243, Glu-286, and Asp-313. (2R)-2-phosphoglycerate-binding residues include Lys-338, Arg-367, Ser-368, and Lys-389. Lys-338 functions as the Proton acceptor in the catalytic mechanism.

The protein belongs to the enolase family. Mg(2+) serves as cofactor.

It localises to the cytoplasm. It is found in the secreted. Its subcellular location is the cell surface. The catalysed reaction is (2R)-2-phosphoglycerate = phosphoenolpyruvate + H2O. It participates in carbohydrate degradation; glycolysis; pyruvate from D-glyceraldehyde 3-phosphate: step 4/5. In terms of biological role, catalyzes the reversible conversion of 2-phosphoglycerate (2-PG) into phosphoenolpyruvate (PEP). It is essential for the degradation of carbohydrates via glycolysis. This is Enolase from Dehalococcoides mccartyi (strain ATCC BAA-2266 / KCTC 15142 / 195) (Dehalococcoides ethenogenes (strain 195)).